The primary structure comprises 233 residues: Ion-translocating oxidoreductase complex subunit E (233 aa).

5 helical membrane-spanning segments follow: residues 22-42 (LLGLCPLLAVTSTATNALGLG), 69-89 (IPIYVMIIAAVVSCVQMLINA), 93-113 (GLYQSLGIFIPLIVTNCIVVG), 128-148 (ALDGMAIGLGATSVMVVLGSI), and 182-202 (PMLLAMLPPGAFIGLGMLLAA).

It belongs to the NqrDE/RnfAE family. The complex is composed of six subunits: RnfA, RnfB, RnfC, RnfD, RnfE and RnfG.

The protein resides in the cell inner membrane. Part of a membrane-bound complex that couples electron transfer with translocation of ions across the membrane. The protein is Ion-translocating oxidoreductase complex subunit E of Erwinia tasmaniensis (strain DSM 17950 / CFBP 7177 / CIP 109463 / NCPPB 4357 / Et1/99).